The chain runs to 187 residues: Putative carbonic anhydrase YtiB (187 aa).

Zn(2+) contacts are provided by Cys-38, Asp-40, His-96, and Cys-99.

The protein belongs to the beta-class carbonic anhydrase family. It depends on Zn(2+) as a cofactor.

The catalysed reaction is hydrogencarbonate + H(+) = CO2 + H2O. Reversible hydration of carbon dioxide. The polypeptide is Putative carbonic anhydrase YtiB (ytiB) (Bacillus subtilis (strain 168)).